The sequence spans 218 residues: Small ribosomal subunit protein uS3 (218 aa).

The region spanning 38–106 is the KH type-2 domain; sequence VREYINKRLQ…RVHINIVEIK (69 aa).

Belongs to the universal ribosomal protein uS3 family. In terms of assembly, part of the 30S ribosomal subunit. Forms a tight complex with proteins S10 and S14.

In terms of biological role, binds the lower part of the 30S subunit head. Binds mRNA in the 70S ribosome, positioning it for translation. The polypeptide is Small ribosomal subunit protein uS3 (Geobacillus thermodenitrificans (strain NG80-2)).